A 387-amino-acid chain; its full sequence is Type 2 DNA topoisomerase 6 subunit A (387 aa).

A Topo IIA-type catalytic domain is found at 12–160; that stretch reads EARKKALAVF…MLILSKEKGK (149 aa). Tyr-106 functions as the O-(5'-phospho-DNA)-tyrosine intermediate in the catalytic mechanism. Residues Glu-207 and Asp-259 each coordinate Mg(2+).

It belongs to the TOP6A family. As to quaternary structure, homodimer. Heterotetramer of two Top6A and two Top6B chains. The cofactor is Mg(2+).

It carries out the reaction ATP-dependent breakage, passage and rejoining of double-stranded DNA.. Functionally, relaxes both positive and negative superturns and exhibits a strong decatenase activity. The protein is Type 2 DNA topoisomerase 6 subunit A of Hyperthermus butylicus (strain DSM 5456 / JCM 9403 / PLM1-5).